The primary structure comprises 517 residues: T-complex protein 11-like protein 2 (517 aa).

The disordered stretch occupies residues 1–59 (MPFNGEKQCVSEDQQSDSESSRFAEGVASLSDYECSRQSFTSDSSSKSSSPASTSPPRG). A Phosphoserine modification is found at Ser16. The span at 36–55 (SRQSFTSDSSSKSSSPASTS) shows a compositional bias: low complexity.

The protein belongs to the TCP11 family. Interacts with FMNL2; this interaction promotes muscle-derived satellite cell (MDSC) migration and differentiation.

The protein localises to the cytoplasm. The protein resides in the cytoskeleton. In terms of biological role, promotes the migration of muscle-derived satellite cells (MDSCs) during differentiation throught interaction with FMNL2 and therefore may participate in microfilament assembly. The polypeptide is T-complex protein 11-like protein 2 (Mus musculus (Mouse)).